Reading from the N-terminus, the 438-residue chain is Ribosomal protein uS12 methylthiotransferase RimO (438 aa).

Residues 1–115 (MKYFILSLGC…LDKLLADLGE (115 aa)) enclose the MTTase N-terminal domain. The [4Fe-4S] cluster site is built by Cys-10, Cys-46, Cys-78, Cys-150, Cys-154, and Cys-157. Residues 136–366 (KSNEVYRYIK…MEVQQEISLN (231 aa)) form the Radical SAM core domain. The TRAM domain occupies 369 to 437 (KALVGKKIPV…IYDLKGEFIN (69 aa)).

The protein belongs to the methylthiotransferase family. RimO subfamily. The cofactor is [4Fe-4S] cluster.

It localises to the cytoplasm. The catalysed reaction is L-aspartate(89)-[ribosomal protein uS12]-hydrogen + (sulfur carrier)-SH + AH2 + 2 S-adenosyl-L-methionine = 3-methylsulfanyl-L-aspartate(89)-[ribosomal protein uS12]-hydrogen + (sulfur carrier)-H + 5'-deoxyadenosine + L-methionine + A + S-adenosyl-L-homocysteine + 2 H(+). In terms of biological role, catalyzes the methylthiolation of an aspartic acid residue of ribosomal protein uS12. The polypeptide is Ribosomal protein uS12 methylthiotransferase RimO (Carboxydothermus hydrogenoformans (strain ATCC BAA-161 / DSM 6008 / Z-2901)).